The chain runs to 182 residues: Succinate dehydrogenase [ubiquinone] cytochrome b small subunit, mitochondrial (182 aa).

The Mitochondrial matrix portion of the chain corresponds to 1–71; it reads MSLSLLLRGA…SAPRMASAGS (71 aa). The chain crosses the membrane as a helical span at residues 72-96; that stretch reads SHTLLWTVERIVSAGLLAVIPAAFI. Residues 97 to 101 lie on the Mitochondrial intermembrane side of the membrane; the sequence is APSQV. A helical transmembrane segment spans residues 102–122; it reads LDALMAISVVIHTHWGVEAMV. Position 113 (His-113) interacts with heme. Over 123-135 the chain is Mitochondrial matrix; sequence VDYMRPSVVGNVL. An a ubiquinone-binding site is contributed by Tyr-125. The helical transmembrane segment at 136–157 threads the bilayer; it reads PKVAHIALIIISVATLGGLFYF. The Mitochondrial intermembrane segment spans residues 158–182; sequence IQNDVGLANGIKRFWAIKGKDAEKA.

The protein belongs to the CybS family. Forms part of complex II containing four subunits: a flavoprotein (FP), an iron-sulfur protein (IP) and a cytochrome b composed of a large and a small subunit.

The protein resides in the mitochondrion inner membrane. It functions in the pathway carbohydrate metabolism; tricarboxylic acid cycle. In terms of biological role, membrane-anchoring subunit of succinate dehydrogenase (SDH) that is involved in complex II of the mitochondrial electron transport chain and is responsible for transferring electrons from succinate to ubiquinone (coenzyme Q). In Drosophila melanogaster (Fruit fly), this protein is Succinate dehydrogenase [ubiquinone] cytochrome b small subunit, mitochondrial.